The primary structure comprises 195 residues: GTP-dependent dephospho-CoA kinase (195 aa).

Residues Asp-49, Val-50, Asp-68, Glu-127, and Asp-150 each contribute to the GTP site.

The protein belongs to the GTP-dependent DPCK family.

The catalysed reaction is 3'-dephospho-CoA + GTP = GDP + CoA + H(+). It functions in the pathway cofactor biosynthesis; coenzyme A biosynthesis. Catalyzes the GTP-dependent phosphorylation of the 3'-hydroxyl group of dephosphocoenzyme A to form coenzyme A (CoA). The polypeptide is GTP-dependent dephospho-CoA kinase (Methanosarcina barkeri (strain Fusaro / DSM 804)).